The primary structure comprises 775 residues: Armadillo-like helical domain-containing protein 4 (775 aa).

An N-terminal signal peptide occupies residues 1 to 47 (MLQDSITGIVNSFNLFFPSTMSRPTLMPTCVAFCSILFLTLATGCQA). Residues 48–715 (FPKVERRETA…KDKAGYMSGM (668 aa)) lie on the Extracellular side of the membrane. N-linked (GlcNAc...) asparagine glycosylation is present at asparagine 76. 3 disordered regions span residues 120–148 (AGLL…PGPS), 247–273 (VPGV…DGQS), and 324–366 (KFES…PSST). Residues 129–142 (GVYSSSEPVVSASE) show a composition bias toward polar residues. A compositionally biased stretch (basic and acidic residues) spans 324 to 335 (KFESISRGRPPE). Asparagine 476 carries N-linked (GlcNAc...) asparagine glycosylation. A disordered region spans residues 559-669 (IPVLGSPMAP…PGITSQEPDI (111 aa)). Residues 577–599 (TISSALPSEGRTSPSISRPNTAA) are compositionally biased toward polar residues. Acidic residues predominate over residues 606–640 (LESEEVEDDEDEEDEEDEEEEEEDEEDEEDEEDKE). Residues 716 to 736 (LVPVGVGIAGALFILGALYSI) form a helical membrane-spanning segment. Topologically, residues 737–775 (KVMNRRRRNGFKRHKRKQREFNSMQDRVMLLADSSEDEF) are cytoplasmic. Residues serine 770 and serine 771 each carry the phosphoserine modification.

Interacts with IL6ST; this interaction prevents IL6ST protein homodimerization and bridges ARMH4 with IL6R and STAT3 and therefore inhibits phosphorylation of STAT3 at 'Tyr-705'. Interacts (via cytoplasmic tail) with RICTOR; this interaction bridges ARMH4 to the mTORC2 complex and inhibits the mTORC2 kinase activity. In terms of tissue distribution, expressed in bone-marroew cells.

It is found in the membrane. Functionally, may modulate immune response and may play a role in inflammation. Down-modulates STAT3 signaling throught direct interaction with IL6ST, resulting in the inhibition of phosphorylation of STAT3 at 'Tyr-705'. May negatively regulates AKT signaling by modulating the activity of mTORC2 complex through RICTOR interaction. The chain is Armadillo-like helical domain-containing protein 4 from Mus musculus (Mouse).